Consider the following 151-residue polypeptide: UPF0208 membrane protein YfbV (151 aa).

A run of 2 helical transmembrane segments spans residues 46 to 65 and 69 to 91; these read YAIR…QIAL and LGPA…WWLG.

Belongs to the UPF0208 family.

It is found in the cell inner membrane. The chain is UPF0208 membrane protein YfbV from Escherichia coli O1:K1 / APEC.